We begin with the raw amino-acid sequence, 185 residues long: Elongation factor P (185 aa).

Belongs to the elongation factor P family.

The protein localises to the cytoplasm. It participates in protein biosynthesis; polypeptide chain elongation. Its function is as follows. Involved in peptide bond synthesis. Stimulates efficient translation and peptide-bond synthesis on native or reconstituted 70S ribosomes in vitro. Probably functions indirectly by altering the affinity of the ribosome for aminoacyl-tRNA, thus increasing their reactivity as acceptors for peptidyl transferase. The sequence is that of Elongation factor P from Salinispora tropica (strain ATCC BAA-916 / DSM 44818 / JCM 13857 / NBRC 105044 / CNB-440).